We begin with the raw amino-acid sequence, 149 residues long: MKVIFLQDVKGKGKKGEVKNVADGYAHNFLIKKGLAVEANASNISALNGQKQKEKKEAIAELEQAKSLKETLEKLTVELSAKSGEGGRLFGSVTSKQITEQLQKDHNIKVDKRKLELPDGIRALGYTNVPVKLHPEVQAVLKVHVKEEA.

This sequence belongs to the bacterial ribosomal protein bL9 family. Part of the 50S ribosomal subunit. In stalled/collided disomes (pairs of ribosomes where the leading ribosome is stalled and a second ribosome has collided with it), bL9 in the collided ribosome contacts bS6 and uL2, while it contacts only helices of the 16S rRNA in the stalled ribosome; the inter-ribosome bridge thus formed is different from that formed between normally translating ribosomes.

Its function is as follows. Binds to the 23S rRNA. The chain is Large ribosomal subunit protein bL9 from Bacillus subtilis (strain 168).